Here is a 235-residue protein sequence, read N- to C-terminus: Caveolin-1 (235 aa).

Over 1–161 (MSTEQDIKTE…LVSLLALPFT (161 aa)) the chain is Cytoplasmic. The interval 29–72 (GEAVVAPEEPKPKKNWFTFGKKKAAPTDETNIEEGGAPGDEPVK) is disordered. The segment at residues 162–182 (IIFAIFFGLLASINVFIIVPL) is an intramembrane region (helical). At 183–235 (GKLLSIPGTLLAKLWNWLIHAIFDPIASAVGLIFSNFNIRKYGINQETTAPCV) the chain is on the cytoplasmic side. Cysteine 234 is lipidated: S-palmitoyl cysteine.

The protein belongs to the caveolin family. Homooligomer containing 14-16 monomers per oligomer.

It is found in the golgi apparatus membrane. It localises to the cell membrane. Its subcellular location is the membrane. The protein localises to the caveola. Functionally, may act as a scaffolding protein within caveolar membranes. Interacts directly with G-protein alpha subunits and can functionally regulate their activity. The polypeptide is Caveolin-1 (cav-1) (Caenorhabditis elegans).